The primary structure comprises 449 residues: Glycosyl hydrolase-like protein 1 (449 aa).

Residues Gln22, His119, 164–165 (NE), Tyr292, Glu350, Trp393, and Tyr406 each bind a beta-D-glucoside. Glu165 serves as the catalytic Proton donor. The active-site Nucleophile is Glu350.

It belongs to the glycosyl hydrolase 1 family. In terms of tissue distribution, mainly expressed in flowers, flower buds and young leaves, and, to a lesser extent, in old leaves, stems and roots.

It is found in the cytoplasm. It participates in secondary metabolite biosynthesis; terpenoid biosynthesis. In terms of biological role, component of the oleanane-type triterpene saponins (e.g. saponarioside A and saponarioside B) biosynthetic pathway, leading to the production of natural products with detergent properties used as traditional sources of soap. Beta-glycosidase that catalyzes the transfer of glucose moiety to QA-triFRXX to produce QA-triF(Q)RXX via the elongation of the C-28 sugar chain with a D-quinovose. This chain is Glycosyl hydrolase-like protein 1, found in Saponaria officinalis (Common soapwort).